Here is a 469-residue protein sequence, read N- to C-terminus: Aspartyl/glutamyl-tRNA(Asn/Gln) amidotransferase subunit B (469 aa).

It belongs to the GatB/GatE family. GatB subfamily. Heterotrimer of A, B and C subunits.

The enzyme catalyses L-glutamyl-tRNA(Gln) + L-glutamine + ATP + H2O = L-glutaminyl-tRNA(Gln) + L-glutamate + ADP + phosphate + H(+). It catalyses the reaction L-aspartyl-tRNA(Asn) + L-glutamine + ATP + H2O = L-asparaginyl-tRNA(Asn) + L-glutamate + ADP + phosphate + 2 H(+). Allows the formation of correctly charged Asn-tRNA(Asn) or Gln-tRNA(Gln) through the transamidation of misacylated Asp-tRNA(Asn) or Glu-tRNA(Gln) in organisms which lack either or both of asparaginyl-tRNA or glutaminyl-tRNA synthetases. The reaction takes place in the presence of glutamine and ATP through an activated phospho-Asp-tRNA(Asn) or phospho-Glu-tRNA(Gln). The protein is Aspartyl/glutamyl-tRNA(Asn/Gln) amidotransferase subunit B of Methanococcus aeolicus (strain ATCC BAA-1280 / DSM 17508 / OCM 812 / Nankai-3).